Here is a 320-residue protein sequence, read N- to C-terminus: Glutaconate CoA-transferase subunit A (320 aa).

It belongs to the 3-oxoacid CoA-transferase subunit A family. Heterooctamer of four A and four B subunits.

The protein resides in the cytoplasm. It catalyses the reaction trans-glutaconate + acetyl-CoA = (2E)-glutaconyl-CoA + acetate. It functions in the pathway amino-acid degradation; L-glutamate degradation via hydroxyglutarate pathway; crotonoyl-CoA from L-glutamate: step 3/5. Its function is as follows. Catalyzes the transfer of the CoA moiety from acetyl-CoA to (R)-2-hydroxyglutarate and related compounds like glutaconate. In Acidaminococcus fermentans (strain ATCC 25085 / DSM 20731 / CCUG 9996 / CIP 106432 / VR4), this protein is Glutaconate CoA-transferase subunit A (gctA).